A 267-amino-acid polypeptide reads, in one-letter code: Thiamine thiazole synthase (267 aa).

Residues Ser-41, 60–61 (ER), Gly-68, Val-132, and 160–162 (HVD) contribute to the NAD(+) site. Fe cation is bound by residues Asp-162 and His-177. Position 227 (Met-227) interacts with NAD(+). Arg-237 contacts glycine.

The protein belongs to the THI4 family. Homooctamer; tetramer of dimers. It depends on Fe(2+) as a cofactor.

The enzyme catalyses hydrogen sulfide + glycine + NAD(+) = ADP-5-ethyl-4-methylthiazole-2-carboxylate + nicotinamide + 3 H2O + H(+). It participates in cofactor biosynthesis; thiamine diphosphate biosynthesis. Its function is as follows. Involved in the biosynthesis of the thiazole moiety of thiamine. Catalyzes the conversion of NAD and glycine to adenosine diphosphate 5-(2-hydroxyethyl)-4-methylthiazole-2-carboxylate (ADT), an adenylated thiazole intermediate, using free sulfide as a source of sulfur. This Saccharolobus islandicus (strain Y.N.15.51 / Yellowstone #2) (Sulfolobus islandicus) protein is Thiamine thiazole synthase.